Here is a 434-residue protein sequence, read N- to C-terminus: Eukaryotic peptide chain release factor subunit 1-2 (434 aa).

N-acetylalanine is present on Ala2.

The protein belongs to the eukaryotic release factor 1 family. In terms of assembly, heterodimer of two subunits, one of which binds GTP.

The protein localises to the cytoplasm. In terms of biological role, directs the termination of nascent peptide synthesis (translation) in response to the termination codons UAA, UAG and UGA. Modulates plant growth and development. The chain is Eukaryotic peptide chain release factor subunit 1-2 from Arabidopsis thaliana (Mouse-ear cress).